The primary structure comprises 398 residues: DNA-directed RNA polymerase III subunit RPC4 (398 aa).

The disordered stretch occupies residues 1-149 (MSEGNAAGEP…IKKEKRETDE (149 aa)). Serine 2 is modified (N-acetylserine). Serine 42 carries the phosphoserine modification. 3 stretches are compositionally biased toward basic and acidic residues: residues 66–100 (KIKEEPKEEVTMKKEKRERDRDRQREGHGRGRGRP), 116–128 (MMKKKGNWDKTVD), and 140–149 (IKKEKRETDE). Glycyl lysine isopeptide (Lys-Gly) (interchain with G-Cter in SUMO2) cross-links involve residues lysine 68 and lysine 78. Arginine 95, arginine 97, and arginine 99 each carry omega-N-methylarginine. Glycyl lysine isopeptide (Lys-Gly) (interchain with G-Cter in SUMO2) cross-links involve residues lysine 141, lysine 152, lysine 160, lysine 190, lysine 199, lysine 206, lysine 220, lysine 285, lysine 302, and lysine 396. A disordered region spans residues 191–244 (EESEEPEAKPFSAGPKEEDMEVDVPAVKVKEEPRDEEEEAKVKAPPRAARKTPG).

It belongs to the eukaryotic RPC4/POLR3D RNA polymerase subunit family. As to quaternary structure, component of the RNA polymerase III complex consisting of 17 subunits: a ten-subunit horseshoe-shaped catalytic core composed of POLR3A/RPC1, POLR3B/RPC2, POLR1C/RPAC1, POLR1D/RPAC2, POLR3K/RPC10, POLR2E/RPABC1, POLR2F/RPABC2, POLR2H/RPABC3, POLR2K/RPABC4 and POLR2L/RPABC5; a mobile stalk composed of two subunits POLR3H/RPC8 and CRCP/RPC9, protruding from the core and functioning primarily in transcription initiation; and additional subunits homologous to general transcription factors of the RNA polymerase II machinery, POLR3C/RPC3-POLR3F/RPC6-POLR3G/RPC7 heterotrimer required for transcription initiation and POLR3D/RPC4-POLR3E/RPC5 heterodimer involved in both transcription initiation and termination. Sumoylation on Lys-141 can serve as a signal to mark misfolded Pol III for proteasomal degradation.

The protein resides in the nucleus. In terms of biological role, DNA-dependent RNA polymerase catalyzes the transcription of DNA into RNA using the four ribonucleoside triphosphates as substrates. Specific peripheric component of RNA polymerase III (Pol III) which synthesizes small non-coding RNAs including 5S rRNA, snRNAs, tRNAs and miRNAs from at least 500 distinct genomic loci. Enables recruitment of Pol III at transcription initiation site and drives transcription initiation from both type 2 and type 3 DNA promoters. Required for efficient transcription termination and reinitiation. Pol III plays a key role in sensing and limiting infection by intracellular bacteria and DNA viruses. Acts as nuclear and cytosolic DNA sensor involved in innate immune response. Can sense non-self dsDNA that serves as template for transcription into dsRNA. The non-self RNA polymerase III transcripts, such as Epstein-Barr virus-encoded RNAs (EBERs) induce type I interferon and NF-kappa-B through the RIG-I pathway. The sequence is that of DNA-directed RNA polymerase III subunit RPC4 from Mus musculus (Mouse).